The primary structure comprises 158 residues: MTVPHPESVGEPGIAVRAPARRRSAWHGQAPVVAVVALGGGIGGTARYAAALLWPTQSGGFPWTTFWVNVVGCAVIGVFMVVITDVWPAHRLVRPFFGTGVLGGFTTFSTYAVDIQKLVDAGHPRTALAYLAATLLAALAAVRLAATAARRVLVRRRR.

Helical transmembrane passes span 25-45 (AWHGQAPVVAVVALGGGIGGT), 63-83 (WTTFWVNVVGCAVIGVFMVVI), 95-115 (PFFGTGVLGGFTTFSTYAVDI), and 126-146 (TALAYLAATLLAALAAVRLAA). G103 and T106 together coordinate Na(+).

It belongs to the fluoride channel Fluc/FEX (TC 1.A.43) family.

It localises to the cell membrane. The enzyme catalyses fluoride(in) = fluoride(out). Its activity is regulated as follows. Na(+) is not transported, but it plays an essential structural role and its presence is essential for fluoride channel function. Fluoride-specific ion channel. Important for reducing fluoride concentration in the cell, thus reducing its toxicity. The polypeptide is Fluoride-specific ion channel FluC 2 (Streptomyces avermitilis (strain ATCC 31267 / DSM 46492 / JCM 5070 / NBRC 14893 / NCIMB 12804 / NRRL 8165 / MA-4680)).